Reading from the N-terminus, the 391-residue chain is Elongation factor Tu 1 (391 aa).

Residues 10-201 (KLHVNIGTIG…EVDRYIPTPE (192 aa)) enclose the tr-type G domain. A G1 region spans residues 19-26 (GHVDHGKT). Residue 19-26 (GHVDHGKT) participates in GTP binding. A Mg(2+)-binding site is contributed by Thr-26. A G2 region spans residues 55-59 (GITIS). The G3 stretch occupies residues 76–79 (DCPG). GTP contacts are provided by residues 76 to 80 (DCPGH) and 131 to 134 (NKVD). The G4 stretch occupies residues 131-134 (NKVD). Positions 169-171 (SAL) are G5.

It belongs to the TRAFAC class translation factor GTPase superfamily. Classic translation factor GTPase family. EF-Tu/EF-1A subfamily. As to quaternary structure, monomer.

The protein localises to the cytoplasm. The catalysed reaction is GTP + H2O = GDP + phosphate + H(+). GTP hydrolase that promotes the GTP-dependent binding of aminoacyl-tRNA to the A-site of ribosomes during protein biosynthesis. This chain is Elongation factor Tu 1, found in Bartonella bacilliformis (strain ATCC 35685 / KC583 / Herrer 020/F12,63).